The primary structure comprises 171 residues: MDSPSLEKDGFLLTTLDGLFGRAQSGSLWYLSFGLACCAVEMMHAAAARYDMDRFGWIPRATPRQADLMIVAGTLTNKMAPAMRKVYDQMSEPRYVLSMGSCANGGGYYHYSYAVVRGCDRIVPVDVYVPGCPPTAEALLYGLMQLQAKIRRDDTASRRELLDRSPNRQPN.

[4Fe-4S] cluster-binding residues include cysteine 37, cysteine 38, cysteine 102, and cysteine 132.

It belongs to the complex I 20 kDa subunit family. As to quaternary structure, NDH-1 is composed of 14 different subunits. Subunits NuoB, C, D, E, F, and G constitute the peripheral sector of the complex. It depends on [4Fe-4S] cluster as a cofactor.

The protein resides in the cell inner membrane. The enzyme catalyses a quinone + NADH + 5 H(+)(in) = a quinol + NAD(+) + 4 H(+)(out). In terms of biological role, NDH-1 shuttles electrons from NADH, via FMN and iron-sulfur (Fe-S) centers, to quinones in the respiratory chain. Couples the redox reaction to proton translocation (for every two electrons transferred, four hydrogen ions are translocated across the cytoplasmic membrane), and thus conserves the redox energy in a proton gradient. This is NADH-quinone oxidoreductase subunit B 2 from Chromobacterium violaceum (strain ATCC 12472 / DSM 30191 / JCM 1249 / CCUG 213 / NBRC 12614 / NCIMB 9131 / NCTC 9757 / MK).